The chain runs to 158 residues: Transcription elongation factor GreA (158 aa).

The stretch at 53-75 (AKERQGQVEATIGDLEDKLSRAQ) forms a coiled coil.

The protein belongs to the GreA/GreB family.

Functionally, necessary for efficient RNA polymerase transcription elongation past template-encoded arresting sites. The arresting sites in DNA have the property of trapping a certain fraction of elongating RNA polymerases that pass through, resulting in locked ternary complexes. Cleavage of the nascent transcript by cleavage factors such as GreA or GreB allows the resumption of elongation from the new 3'terminus. GreA releases sequences of 2 to 3 nucleotides. The polypeptide is Transcription elongation factor GreA (Sphingopyxis alaskensis (strain DSM 13593 / LMG 18877 / RB2256) (Sphingomonas alaskensis)).